The following is a 253-amino-acid chain: Discoidin-1 subunit B/C (253 aa).

Serine 2 is modified (N-acetylserine). Residues serine 2–glutamine 152 enclose the F5/8 type C domain. Positions arginine 79 to aspartate 81 match the Cell attachment site motif.

As to quaternary structure, tetramer of four different chains (A to D). Stalk cells.

The protein localises to the cytoplasm. Functionally, galactose- and N-acetylgalactosamine-binding lectin. May play a role in cell-substratum adhesion rather than in cell-cell adhesion. May be necessary for the maintenance of normal elongate morphology during aggregation. This is Discoidin-1 subunit B/C (dscC-1) from Dictyostelium discoideum (Social amoeba).